The sequence spans 508 residues: NADH-quinone oxidoreductase subunit M (508 aa).

The next 15 helical transmembrane spans lie at 1–21 (MLLP…LLFN), 36–56 (MALV…VIVS), 63–83 (WSFE…HLAV), 86–106 (LSIL…FCSW), 113–133 (IGLF…IFIS), 136–156 (LFLF…LMIM), 177–197 (FFIY…VLVY), 220–240 (IVLE…KIPI), 255–275 (PVIG…YALM), 288–308 (IFSS…AIVS), 317–337 (FIAY…YSIN), 343–363 (GAII…LLSG), 389–409 (GFLL…NFVG), 423–443 (MIVI…LMFV), and 470–490 (LIFV…NIII).

This sequence belongs to the complex I subunit 4 family. Composed of 13 different subunits. Subunits NuoA, H, J, K, L, M, N constitute the membrane sector of the complex.

The protein localises to the cell membrane. The enzyme catalyses a quinone + NADH + 5 H(+)(in) = a quinol + NAD(+) + 4 H(+)(out). Functionally, NDH-1 shuttles electrons from NADH, via FMN and iron-sulfur (Fe-S) centers, to quinones in the respiratory chain. Couples the redox reaction to proton translocation (for every two electrons transferred, four hydrogen ions are translocated across the cytoplasmic membrane), and thus conserves the redox energy in a proton gradient. The polypeptide is NADH-quinone oxidoreductase subunit M (nuoM) (Buchnera aphidicola subsp. Baizongia pistaciae (strain Bp)).